Here is a 1204-residue protein sequence, read N- to C-terminus: E3 ubiquitin-protein ligase DZIP3 (1204 aa).

2 disordered regions span residues 1 to 22 (MDSLAEEFFVSGNPDVEEQTKE) and 640 to 681 (SIPS…EQVS). Over residues 649–658 (SVKDLQEVKS) the composition is skewed to basic and acidic residues. The span at 659–668 (KTKKKKRTKS) shows a compositional bias: basic residues. 2 coiled-coil regions span residues 746–861 (KETE…TSRA) and 906–941 (QLKAAVDSWNAIVADVRNKIAFLRTQYNEQINKVKQ). The span at 1088–1098 (PKKSESEEKSA) shows a compositional bias: basic and acidic residues. A disordered region spans residues 1088 to 1141 (PKKSESEEKSAQDGNNASPSHTASQPNAPQDPKSAQGSATWEGDKDMDNEEEEE). Positions 1099–1126 (QDGNNASPSHTASQPNAPQDPKSAQGSA) are enriched in polar residues. The segment covering 1132-1141 (KDMDNEEEEE) has biased composition (acidic residues). The segment at 1144–1184 (CVICHENLSPENLSVLPCAHKFHSQCIRPWLMQQGTCPTCR) adopts an RING-type; atypical zinc-finger fold.

As to quaternary structure, probably interacts with DAZL.

The protein localises to the cytoplasm. The catalysed reaction is S-ubiquitinyl-[E2 ubiquitin-conjugating enzyme]-L-cysteine + [acceptor protein]-L-lysine = [E2 ubiquitin-conjugating enzyme]-L-cysteine + N(6)-ubiquitinyl-[acceptor protein]-L-lysine.. Its pathway is protein modification; protein ubiquitination. Functionally, E3 Ubiquitin ligase proteins mediate ubiquitination and subsequent proteasomal degradation of target proteins. E3 ubiquitin ligases accept ubiquitin from an E2 ubiquitin-conjugating enzyme in the form of a thioester and then directly transfers the ubiquitin to targeted substrates. Able to specifically bind RNA. The chain is E3 ubiquitin-protein ligase DZIP3 (Dzip3) from Mus musculus (Mouse).